Here is a 213-residue protein sequence, read N- to C-terminus: Pyrrolidone-carboxylate peptidase (213 aa).

Catalysis depends on residues E80, C143, and H166.

This sequence belongs to the peptidase C15 family. As to quaternary structure, homotetramer.

Its subcellular location is the cytoplasm. It catalyses the reaction Release of an N-terminal pyroglutamyl group from a polypeptide, the second amino acid generally not being Pro.. In terms of biological role, removes 5-oxoproline from various penultimate amino acid residues except L-proline. This Clavibacter michiganensis subsp. michiganensis (strain NCPPB 382) protein is Pyrrolidone-carboxylate peptidase.